The chain runs to 368 residues: Glutamate 5-kinase (368 aa).

Residue lysine 13 coordinates ATP. The substrate site is built by serine 54, aspartate 141, and asparagine 153. 173-174 serves as a coordination point for ATP; that stretch reads SD. The 78-residue stretch at 278–355 folds into the PUA domain; it reads RGVITVDEGA…DEIEAILGYA (78 aa).

Belongs to the glutamate 5-kinase family.

Its subcellular location is the cytoplasm. It catalyses the reaction L-glutamate + ATP = L-glutamyl 5-phosphate + ADP. The protein operates within amino-acid biosynthesis; L-proline biosynthesis; L-glutamate 5-semialdehyde from L-glutamate: step 1/2. Catalyzes the transfer of a phosphate group to glutamate to form L-glutamate 5-phosphate. The sequence is that of Glutamate 5-kinase from Ruegeria sp. (strain TM1040) (Silicibacter sp.).